The primary structure comprises 215 residues: uncharacterized protein (215 aa).

The first 17 residues, 1-17 (MKKVLASATILSLMLVG), serve as a signal peptide directing secretion. Residues 17 to 110 (GCSNGGNDES…NKQQQSVQDN (94 aa)) are disordered. Cys-18 is lipidated: N-palmitoyl cysteine. Cys-18 carries the S-diacylglycerol cysteine lipid modification. Over residues 25 to 62 (ESSHKDDSSKTEQKDKSSSQHDSKKDSKRNDTNNKQDN) the composition is skewed to basic and acidic residues. Low complexity-rich tracts occupy residues 63 to 76 (QENN…NNQN) and 91 to 110 (NSNG…VQDN).

Its subcellular location is the cell membrane. This is an uncharacterized protein from Staphylococcus epidermidis (strain ATCC 35984 / DSM 28319 / BCRC 17069 / CCUG 31568 / BM 3577 / RP62A).